The chain runs to 122 residues: Large ribosomal subunit protein uL14 (122 aa).

The protein belongs to the universal ribosomal protein uL14 family. In terms of assembly, part of the 50S ribosomal subunit. Forms a cluster with proteins L3 and L19. In the 70S ribosome, L14 and L19 interact and together make contacts with the 16S rRNA in bridges B5 and B8.

Its function is as follows. Binds to 23S rRNA. Forms part of two intersubunit bridges in the 70S ribosome. This is Large ribosomal subunit protein uL14 from Streptomyces avermitilis (strain ATCC 31267 / DSM 46492 / JCM 5070 / NBRC 14893 / NCIMB 12804 / NRRL 8165 / MA-4680).